The chain runs to 252 residues: 5-oxoprolinase subunit A (252 aa).

It belongs to the LamB/PxpA family. In terms of assembly, forms a complex composed of PxpA, PxpB and PxpC.

The enzyme catalyses 5-oxo-L-proline + ATP + 2 H2O = L-glutamate + ADP + phosphate + H(+). In terms of biological role, catalyzes the cleavage of 5-oxoproline to form L-glutamate coupled to the hydrolysis of ATP to ADP and inorganic phosphate. This Bordetella pertussis (strain Tohama I / ATCC BAA-589 / NCTC 13251) protein is 5-oxoprolinase subunit A.